The chain runs to 95 residues: Small ribosomal subunit protein uS17 (95 aa).

It belongs to the universal ribosomal protein uS17 family. As to quaternary structure, part of the 30S ribosomal subunit.

In terms of biological role, one of the primary rRNA binding proteins, it binds specifically to the 5'-end of 16S ribosomal RNA. In Mesomycoplasma hyopneumoniae (strain 7448) (Mycoplasma hyopneumoniae), this protein is Small ribosomal subunit protein uS17.